A 1142-amino-acid chain; its full sequence is SNF1-activating kinase 1 (1142 aa).

Residues 22–41 (ELEKSGTSSSVSLRSPTKSS) are disordered. At Thr43 the chain carries Phosphothreonine. Residues 82–93 (QHQQHISSSLAK) show a composition bias toward polar residues. The tract at residues 82-107 (QHQQHISSSLAKTPTTTSSFCSSGSS) is disordered. The span at 94–107 (TPTTTSSFCSSGSS) shows a compositional bias: low complexity. The 316-residue stretch at 133 to 448 (YEIIKELGHG…IPAIKKHPFV (316 aa)) folds into the Protein kinase domain. ATP contacts are provided by residues 139-147 (LGHGQHGKV) and Lys162. The active-site Proton acceptor is Asp277. Disordered stretches follow at residues 634–678 (SPEA…VLPQ), 694–799 (NSLL…NSPI), 825–875 (SHFN…AYSE), 919–971 (KSSL…QKGS), 1005–1027 (SQPI…KATT), and 1066–1142 (STNA…SALP). The span at 640–656 (SVSSVPNLPSAPSSTRL) shows a compositional bias: polar residues. Over residues 694-706 (NSLLRNSSSHLTS) the composition is skewed to low complexity. Residues 707-741 (YNSGRPSSRTGRMNSRNQNLPKIPNSLSKISTTKL) show a composition bias toward polar residues. Positions 742–751 (TELRVPKDSE) are enriched in basic and acidic residues. The segment covering 785–799 (NINSSDKSGSKNSPI) has biased composition (polar residues). Low complexity-rich tracts occupy residues 835-868 (SSQS…RNSS) and 920-936 (SSLN…SSSS). Residues 958–971 (SKLSELSNSPQKGS) show a composition bias toward polar residues. Ser964 is modified (phosphoserine). The segment covering 1096 to 1111 (NDEHARNTSCHGDKGQ) has biased composition (basic and acidic residues). Ser1126 is modified (phosphoserine). Over residues 1133–1142 (NEEKRRSALP) the composition is skewed to basic and acidic residues.

It belongs to the protein kinase superfamily. Ser/Thr protein kinase family. In terms of assembly, associates with the SNF1 kinase complex. Interacts with SNF1 and REG1. Autophosphorylated.

The protein resides in the cytoplasm. It catalyses the reaction L-seryl-[protein] + ATP = O-phospho-L-seryl-[protein] + ADP + H(+). The enzyme catalyses L-threonyl-[protein] + ATP = O-phospho-L-threonyl-[protein] + ADP + H(+). Its function is as follows. Serine/threonine-protein kinase that phosphorylates SNF1, the catalytic subunit of the SNF1 kinase complex. Acts as an activator of the SNF1 kinase complex and controls its nuclear localization upon glucose and nitrogen depletion. Also required for SNF1 kinase activation under other stress conditions like alkaline pH or presence of cadmium. In Saccharomyces cerevisiae (strain ATCC 204508 / S288c) (Baker's yeast), this protein is SNF1-activating kinase 1 (SAK1).